We begin with the raw amino-acid sequence, 470 residues long: ATP synthase subunit beta (470 aa).

An ATP-binding site is contributed by 148–155 (GGAGVGKT).

The protein belongs to the ATPase alpha/beta chains family. In terms of assembly, F-type ATPases have 2 components, CF(1) - the catalytic core - and CF(0) - the membrane proton channel. CF(1) has five subunits: alpha(3), beta(3), gamma(1), delta(1), epsilon(1). CF(0) has three main subunits: a(1), b(2) and c(9-12). The alpha and beta chains form an alternating ring which encloses part of the gamma chain. CF(1) is attached to CF(0) by a central stalk formed by the gamma and epsilon chains, while a peripheral stalk is formed by the delta and b chains.

Its subcellular location is the cell inner membrane. It carries out the reaction ATP + H2O + 4 H(+)(in) = ADP + phosphate + 5 H(+)(out). Produces ATP from ADP in the presence of a proton gradient across the membrane. The catalytic sites are hosted primarily by the beta subunits. This Teredinibacter turnerae (strain ATCC 39867 / T7901) protein is ATP synthase subunit beta.